The chain runs to 541 residues: Membrane protein insertase YidC (541 aa).

Residues 7-27 traverse the membrane as a helical segment; it reads ILLLALALVSFLLFQQWQVET. The segment covering 34-55 has biased composition (polar residues); sequence TVSTVQQTHKNGDVPTSSTANS. The tract at residues 34 to 59 is disordered; it reads TVSTVQQTHKNGDVPTSSTANSDAPV. 4 consecutive transmembrane segments (helical) span residues 343 to 363, 418 to 438, 456 to 476, and 495 to 515; these read SFIQ…TFIV, LGGC…YWAL, LSAQ…MFLI, and FIPV…VLYW.

Belongs to the OXA1/ALB3/YidC family. Type 1 subfamily. Interacts with the Sec translocase complex via SecD. Specifically interacts with transmembrane segments of nascent integral membrane proteins during membrane integration.

The protein resides in the cell inner membrane. Functionally, required for the insertion and/or proper folding and/or complex formation of integral membrane proteins into the membrane. Involved in integration of membrane proteins that insert both dependently and independently of the Sec translocase complex, as well as at least some lipoproteins. Aids folding of multispanning membrane proteins. The chain is Membrane protein insertase YidC from Aliivibrio salmonicida (strain LFI1238) (Vibrio salmonicida (strain LFI1238)).